We begin with the raw amino-acid sequence, 375 residues long: ATP phosphoribosyltransferase regulatory subunit (375 aa).

The protein belongs to the class-II aminoacyl-tRNA synthetase family. HisZ subfamily. In terms of assembly, heteromultimer composed of HisG and HisZ subunits.

The protein localises to the cytoplasm. The protein operates within amino-acid biosynthesis; L-histidine biosynthesis; L-histidine from 5-phospho-alpha-D-ribose 1-diphosphate: step 1/9. Required for the first step of histidine biosynthesis. May allow the feedback regulation of ATP phosphoribosyltransferase activity by histidine. The protein is ATP phosphoribosyltransferase regulatory subunit of Agrobacterium fabrum (strain C58 / ATCC 33970) (Agrobacterium tumefaciens (strain C58)).